The following is a 101-amino-acid chain: Urease subunit beta (101 aa).

The protein belongs to the urease beta subunit family. Heterotrimer of UreA (gamma), UreB (beta) and UreC (alpha) subunits. Three heterotrimers associate to form the active enzyme.

It is found in the cytoplasm. It catalyses the reaction urea + 2 H2O + H(+) = hydrogencarbonate + 2 NH4(+). It participates in nitrogen metabolism; urea degradation; CO(2) and NH(3) from urea (urease route): step 1/1. The polypeptide is Urease subunit beta (Rhodopseudomonas palustris (strain HaA2)).